A 273-amino-acid polypeptide reads, in one-letter code: NH(3)-dependent NAD(+) synthetase (273 aa).

47–54 is an ATP binding site; the sequence is GISGGQDS. Residue aspartate 53 participates in Mg(2+) binding. Arginine 139 contributes to the deamido-NAD(+) binding site. Threonine 159 provides a ligand contact to ATP. Mg(2+) is bound at residue glutamate 164. Residues lysine 172 and aspartate 179 each coordinate deamido-NAD(+). ATP contacts are provided by lysine 188 and threonine 210. 259-260 serves as a coordination point for deamido-NAD(+); the sequence is HK.

The protein belongs to the NAD synthetase family. As to quaternary structure, homodimer.

It catalyses the reaction deamido-NAD(+) + NH4(+) + ATP = AMP + diphosphate + NAD(+) + H(+). It functions in the pathway cofactor biosynthesis; NAD(+) biosynthesis; NAD(+) from deamido-NAD(+) (ammonia route): step 1/1. Its function is as follows. Catalyzes the ATP-dependent amidation of deamido-NAD to form NAD. Uses ammonia as a nitrogen source. This chain is NH(3)-dependent NAD(+) synthetase, found in Staphylococcus aureus (strain N315).